A 346-amino-acid chain; its full sequence is Tryptophan--tRNA ligase (346 aa).

Residues 21–23 (QPT) and 30–31 (GN) contribute to the ATP site. The short motif at 22–31 (PTADSYHLGN) is the 'HIGH' region element. D147 contacts L-tryptophan. ATP-binding positions include 159–161 (GED), I198, and 207–211 (KMSKS). The short motif at 207-211 (KMSKS) is the 'KMSKS' region element.

Belongs to the class-I aminoacyl-tRNA synthetase family. As to quaternary structure, homodimer.

The protein localises to the cytoplasm. The catalysed reaction is tRNA(Trp) + L-tryptophan + ATP = L-tryptophyl-tRNA(Trp) + AMP + diphosphate + H(+). Functionally, catalyzes the attachment of tryptophan to tRNA(Trp). This Corynebacterium efficiens (strain DSM 44549 / YS-314 / AJ 12310 / JCM 11189 / NBRC 100395) protein is Tryptophan--tRNA ligase.